The sequence spans 54 residues: Preprotein translocase subunit SecG (54 aa).

The Cytoplasmic portion of the chain corresponds to Met1 to Asp31. Residues Pro32 to Val53 traverse the membrane as a helical segment. Position 54 (Ala54) is a topological domain, extracellular.

Belongs to the SEC61-beta family. As to quaternary structure, component of the protein translocase complex. Heterotrimer consisting of alpha (SecY), beta (SecG) and gamma (SecE) subunits. Can form oligomers of the heterotrimer.

It is found in the cell membrane. Functionally, involved in protein export. The function of the beta subunit is unknown, but it may be involved in stabilization of the trimeric complex. This Halorubrum lacusprofundi (strain ATCC 49239 / DSM 5036 / JCM 8891 / ACAM 34) protein is Preprotein translocase subunit SecG.